Here is a 226-residue protein sequence, read N- to C-terminus: PKHD-type hydroxylase Pput_0892 (226 aa).

In terms of domain architecture, Fe2OG dioxygenase spans Lys78–Ser178. Residues His96, Asp98, and His159 each coordinate Fe cation. Arg169 is a 2-oxoglutarate binding site.

Fe(2+) serves as cofactor. The cofactor is L-ascorbate.

The polypeptide is PKHD-type hydroxylase Pput_0892 (Pseudomonas putida (strain ATCC 700007 / DSM 6899 / JCM 31910 / BCRC 17059 / LMG 24140 / F1)).